The primary structure comprises 434 residues: MAQHTPATSRAGTFGAILRVTSGNFLEQFDFFLFGFYATYIARTFFPAESEFASLMLTFAVFGSGFLMRPVGAIVLGAYIDRIGRRKGLMVTLAIMGCGTLLIALVPGYQTIGLAAPALVLLGRLLQGFSAGVELGGVSVYLSEIATPGNKGFYTSWQSASQQVAIVVAALIGYSLNITLGHDAISEWGWRIPFFIGCMIIPLIFVLRRSLQETEAFLQRKHRPDTREIFATIAKNWRIITAGTLLVAMTTTTFYFITVYTPTYGRTVLNLSARDSLIVTMLVGVSNFIWLPIGGAISDRIGRRAVLMGITLLALITTWPVMQWLTAAPDFTRMTLVLLWFSFFFGMYNGAMVAALTEVMPVYVRTVGFSLAFSLATAIFGGLTPAISTALVKLTGDKSSPGWWLMCAALCGLAATAMLFVRLSRGYIAAENKA.

The Cytoplasmic portion of the chain corresponds to 1 to 21 (MAQHTPATSRAGTFGAILRVT). The chain crosses the membrane as a helical span at residues 22 to 42 (SGNFLEQFDFFLFGFYATYIA). Residues 43–54 (RTFFPAESEFAS) lie on the Periplasmic side of the membrane. A helical membrane pass occupies residues 55-75 (LMLTFAVFGSGFLMRPVGAIV). At 76–87 (LGAYIDRIGRRK) the chain is on the cytoplasmic side. Residues 88–108 (GLMVTLAIMGCGTLLIALVPG) traverse the membrane as a helical segment. The Periplasmic segment spans residues 109–111 (YQT). Residues 112–132 (IGLAAPALVLLGRLLQGFSAG) traverse the membrane as a helical segment. At 133-164 (VELGGVSVYLSEIATPGNKGFYTSWQSASQQV) the chain is on the cytoplasmic side. Residues 165 to 185 (AIVVAALIGYSLNITLGHDAI) form a helical membrane-spanning segment. A topological domain (periplasmic) is located at residue S186. The chain crosses the membrane as a helical span at residues 187 to 207 (EWGWRIPFFIGCMIIPLIFVL). At 208 to 238 (RRSLQETEAFLQRKHRPDTREIFATIAKNWR) the chain is on the cytoplasmic side. Residues 239-259 (IITAGTLLVAMTTTTFYFITV) traverse the membrane as a helical segment. The Periplasmic portion of the chain corresponds to 260 to 276 (YTPTYGRTVLNLSARDS). The chain crosses the membrane as a helical span at residues 277-297 (LIVTMLVGVSNFIWLPIGGAI). Residues 298 to 304 (SDRIGRR) are Cytoplasmic-facing. The chain crosses the membrane as a helical span at residues 305 to 325 (AVLMGITLLALITTWPVMQWL). Over 326 to 335 (TAAPDFTRMT) the chain is Periplasmic. The helical transmembrane segment at 336–356 (LVLLWFSFFFGMYNGAMVAAL) threads the bilayer. Over 357 to 366 (TEVMPVYVRT) the chain is Cytoplasmic. A helical membrane pass occupies residues 367–387 (VGFSLAFSLATAIFGGLTPAI). At 388-400 (STALVKLTGDKSS) the chain is on the periplasmic side. Residues 401–421 (PGWWLMCAALCGLAATAMLFV) form a helical membrane-spanning segment. Residues 422-434 (RLSRGYIAAENKA) lie on the Cytoplasmic side of the membrane.

The protein belongs to the major facilitator superfamily. Metabolite:H+ Symporter (MHS) family (TC 2.A.1.6) family.

It is found in the cell inner membrane. Its function is as follows. Uptake of citrate across the boundary membrane with the concomitant transport of protons into the cell (symport system). This is Citrate-proton symporter (citA) from Salmonella typhi.